We begin with the raw amino-acid sequence, 317 residues long: HTH-type transcriptional regulator CfxR (317 aa).

Residues 8-65 (LTLRQLQIFVTVARHASFVRAAEELHLTQPAVSMQVKQLESVVGMALFERVKGQLTLT) form the HTH lysR-type domain. Residues 25–44 (FVRAAEELHLTQPAVSMQVK) constitute a DNA-binding region (H-T-H motif).

It belongs to the LysR transcriptional regulatory family.

Trans-acting transcriptional regulator of RuBisCO genes (cfxLS) expression. In Cupriavidus necator (strain ATCC 17699 / DSM 428 / KCTC 22496 / NCIMB 10442 / H16 / Stanier 337) (Ralstonia eutropha), this protein is HTH-type transcriptional regulator CfxR (cfxR).